Consider the following 201-residue polypeptide: 3-isopropylmalate dehydratase small subunit (201 aa).

The protein belongs to the LeuD family. LeuD type 1 subfamily. Heterodimer of LeuC and LeuD.

The catalysed reaction is (2R,3S)-3-isopropylmalate = (2S)-2-isopropylmalate. Its pathway is amino-acid biosynthesis; L-leucine biosynthesis; L-leucine from 3-methyl-2-oxobutanoate: step 2/4. Catalyzes the isomerization between 2-isopropylmalate and 3-isopropylmalate, via the formation of 2-isopropylmaleate. This Shewanella woodyi (strain ATCC 51908 / MS32) protein is 3-isopropylmalate dehydratase small subunit.